A 392-amino-acid chain; its full sequence is MIDCQYYQQNECRSCQWLEIPYDQQIAEKQHHLKQQLISLDCSDVHWLAPFKSNEQGFRNKAKMLVSGSVERPILGILKNPNDPQSAIDLCDCPLYPAHFSIIFSILKDFIGRAGLVPYNIAKQKGELKYILLTESIATGKLMLRFVLRTENKLPLIRRELPKLLEKLPHLEVISINLQPQHAAILEGEQEIFLTEQQFLPENFNGIPLFIRPQGFFQTNPKVAAGLYATAQQWVAEFPIYNLWDLFCGVGGFGLHCAKALQEKWGKPIKLTGIEISSSAILAASHSAKILGLEHVNFQSLNAASVMENKNENKPDLVIVNPPRRGIGKQLSEFLNQIQPHFILYSSCNAMTMGKDLQHLTCYKPLKIQLFDMFPQTSHYEVLVLLERKKIN.

Residues Cys4, Cys12, Cys15, and Cys93 each coordinate [4Fe-4S] cluster. The S-adenosyl-L-methionine site is built by Gln218, Phe247, Glu275, and Asn321. Cys348 serves as the catalytic Nucleophile.

It belongs to the class I-like SAM-binding methyltransferase superfamily. RNA M5U methyltransferase family. RlmC subfamily.

It catalyses the reaction uridine(747) in 23S rRNA + S-adenosyl-L-methionine = 5-methyluridine(747) in 23S rRNA + S-adenosyl-L-homocysteine + H(+). Its function is as follows. Catalyzes the formation of 5-methyl-uridine at position 747 (m5U747) in 23S rRNA. The protein is 23S rRNA (uracil(747)-C(5))-methyltransferase RlmC of Haemophilus influenzae (strain PittEE).